The sequence spans 278 residues: Leucine-rich repeat-containing protein 10 (278 aa).

8 LRR repeats span residues 30-51, 52-74, 76-97, 98-121, 123-143, 144-166, 167-189, and 191-213; these read LDRM…VCSF, QELV…LGQL, NLQI…VCTL, KQLC…SLLQ, LRTL…VCEL, SLLK…LQRL, RELR…LLHM, and FLEI…HLSS. Positions 239–250 are enriched in basic and acidic residues; sequence RWAEETPEPDPR. Residues 239–278 are disordered; the sequence is RWAEETPEPDPRKARRYALAREESQEAQLPALPPLPPTNS. Residues 269 to 278 are compositionally biased toward pro residues; the sequence is ALPPLPPTNS.

The protein localises to the nucleus. Its function is as follows. May play important roles in cardiac development and/or cardiac function. The sequence is that of Leucine-rich repeat-containing protein 10 (LRRC10) from Bos taurus (Bovine).